We begin with the raw amino-acid sequence, 406 residues long: DNA repair protein RAD55 (406 aa).

43-50 (GPPGIGKT) contacts ATP. A disordered region spans residues 385-406 (DSNDNPLPNAEGKEEIIYDSEG).

It belongs to the RecA family. RAD55 subfamily.

The protein localises to the nucleus. Required for radiation resistance and meiotic viability and presumably acts in recombination and recombinational DNA repair pathways. In Saccharomyces cerevisiae (strain ATCC 204508 / S288c) (Baker's yeast), this protein is DNA repair protein RAD55 (RAD55).